The primary structure comprises 169 residues: Oleosin Ara h 10.0101 (169 aa).

2 consecutive transmembrane segments (helical) span residues 39-59 and 73-93; these read VIAV…AGLA and LFIL…LSVA. Positions 146-156 are enriched in basic and acidic residues; it reads KDVGQKTKEVG. A disordered region spans residues 146–169; it reads KDVGQKTKEVGQEIQTKAQDSKRT.

The protein belongs to the oleosin family. Expressed in seeds (at protein level).

The protein localises to the lipid droplet. It localises to the membrane. Its function is as follows. May have a structural role to stabilize the lipid body during desiccation of the seed by preventing coalescence of the oil. Probably interacts with both lipid and phospholipid moieties of lipid bodies. May also provide recognition signals for specific lipase anchorage in lipolysis during seedling growth. This chain is Oleosin Ara h 10.0101, found in Arachis hypogaea (Peanut).